Here is a 274-residue protein sequence, read N- to C-terminus: D-aminoacyl-tRNA deacylase (274 aa).

It belongs to the DtdA deacylase family. As to quaternary structure, monomer. Zn(2+) is required as a cofactor.

The catalysed reaction is a D-aminoacyl-tRNA + H2O = a tRNA + a D-alpha-amino acid + H(+). It carries out the reaction glycyl-tRNA(Ala) + H2O = tRNA(Ala) + glycine + H(+). D-aminoacyl-tRNA deacylase with broad substrate specificity. By recycling D-aminoacyl-tRNA to D-amino acids and free tRNA molecules, this enzyme counteracts the toxicity associated with the formation of D-aminoacyl-tRNA entities in vivo. The sequence is that of D-aminoacyl-tRNA deacylase from Pyrococcus horikoshii (strain ATCC 700860 / DSM 12428 / JCM 9974 / NBRC 100139 / OT-3).